We begin with the raw amino-acid sequence, 333 residues long: Holliday junction branch migration complex subunit RuvB (333 aa).

The segment at Met1–Tyr181 is large ATPase domain (RuvB-L). ATP is bound by residues Leu20, Arg21, Gly62, Lys65, Thr66, Thr67, Glu128 to Phe130, Arg171, Tyr181, and Arg218. Mg(2+) is bound at residue Thr66. The small ATPAse domain (RuvB-S) stretch occupies residues Gln182–Asp252. Residues Ala255 to Asp333 form a head domain (RuvB-H) region. 3 residues coordinate DNA: Arg291, Arg310, and Arg315.

Belongs to the RuvB family. Homohexamer. Forms an RuvA(8)-RuvB(12)-Holliday junction (HJ) complex. HJ DNA is sandwiched between 2 RuvA tetramers; dsDNA enters through RuvA and exits via RuvB. An RuvB hexamer assembles on each DNA strand where it exits the tetramer. Each RuvB hexamer is contacted by two RuvA subunits (via domain III) on 2 adjacent RuvB subunits; this complex drives branch migration. In the full resolvosome a probable DNA-RuvA(4)-RuvB(12)-RuvC(2) complex forms which resolves the HJ.

The protein localises to the cytoplasm. The catalysed reaction is ATP + H2O = ADP + phosphate + H(+). The RuvA-RuvB-RuvC complex processes Holliday junction (HJ) DNA during genetic recombination and DNA repair, while the RuvA-RuvB complex plays an important role in the rescue of blocked DNA replication forks via replication fork reversal (RFR). RuvA specifically binds to HJ cruciform DNA, conferring on it an open structure. The RuvB hexamer acts as an ATP-dependent pump, pulling dsDNA into and through the RuvAB complex. RuvB forms 2 homohexamers on either side of HJ DNA bound by 1 or 2 RuvA tetramers; 4 subunits per hexamer contact DNA at a time. Coordinated motions by a converter formed by DNA-disengaged RuvB subunits stimulates ATP hydrolysis and nucleotide exchange. Immobilization of the converter enables RuvB to convert the ATP-contained energy into a lever motion, pulling 2 nucleotides of DNA out of the RuvA tetramer per ATP hydrolyzed, thus driving DNA branch migration. The RuvB motors rotate together with the DNA substrate, which together with the progressing nucleotide cycle form the mechanistic basis for DNA recombination by continuous HJ branch migration. Branch migration allows RuvC to scan DNA until it finds its consensus sequence, where it cleaves and resolves cruciform DNA. The protein is Holliday junction branch migration complex subunit RuvB of Lactococcus lactis subsp. lactis (strain IL1403) (Streptococcus lactis).